Reading from the N-terminus, the 308-residue chain is Cyclin-D2-1 (308 aa).

Residues 286–308 (EGLSYDSSSPPPPKRRKRSPPGT) form a disordered region. The span at 298–308 (PKRRKRSPPGT) shows a compositional bias: basic residues.

The protein belongs to the cyclin family. Cyclin D subfamily.

In Oryza sativa subsp. japonica (Rice), this protein is Cyclin-D2-1 (CYCD2-1).